Here is a 375-residue protein sequence, read N- to C-terminus: Period circadian protein (375 aa).

Disordered stretches follow at residues threonine 28–proline 118, lysine 140–glutamate 189, and cysteine 220–alanine 254. The span at serine 69 to threonine 91 shows a compositional bias: low complexity. The span at glycine 92–asparagine 113 shows a compositional bias: gly residues. Positions arginine 145–alanine 156 are enriched in basic and acidic residues. The span at glycine 224–glycine 243 shows a compositional bias: gly residues. Polar residues predominate over residues asparagine 245–alanine 254.

Forms a heterodimer with timeless (TIM); the complex then translocates into the nucleus. Phosphorylated with a circadian rhythmicity, probably by the double-time protein (dbt). Phosphorylation could be implicated in the stability of per monomer and in the formation of heterodimer per-tim.

The protein localises to the nucleus. It is found in the cytoplasm. The protein resides in the perinuclear region. Essential for biological clock functions. Determines the period length of circadian and ultradian rhythms; an increase in PER dosage leads to shortened circadian rhythms and a decrease leads to lengthened circadian rhythms. Essential for the circadian rhythmicity of locomotor activity, eclosion behavior, and for the rhythmic component of the male courtship song that originates in the thoracic nervous system. The biological cycle depends on the rhythmic formation and nuclear localization of the TIM-PER complex. Light induces the degradation of TIM, which promotes elimination of PER. Nuclear activity of the heterodimer coordinatively regulates PER and TIM transcription through a negative feedback loop. Behaves as a negative element in circadian transcriptional loop. Does not appear to bind DNA, suggesting indirect transcriptional inhibition. The protein is Period circadian protein (per) of Drosophila capricorni (Fruit fly).